The following is a 681-amino-acid chain: DNA ligase (681 aa).

NAD(+) contacts are provided by residues 33 to 37 (DGQFD), 83 to 84 (SL), and Glu-113. Lys-115 acts as the N6-AMP-lysine intermediate in catalysis. NAD(+) contacts are provided by Arg-136, Glu-176, Lys-292, and Lys-316. Residues Cys-410, Cys-413, Cys-429, and Cys-435 each coordinate Zn(2+). The BRCT domain maps to 599–681 (SIPRNLEGLS…RALLADGPPA (83 aa)).

Belongs to the NAD-dependent DNA ligase family. LigA subfamily. Mg(2+) is required as a cofactor. Mn(2+) serves as cofactor.

The catalysed reaction is NAD(+) + (deoxyribonucleotide)n-3'-hydroxyl + 5'-phospho-(deoxyribonucleotide)m = (deoxyribonucleotide)n+m + AMP + beta-nicotinamide D-nucleotide.. Its function is as follows. DNA ligase that catalyzes the formation of phosphodiester linkages between 5'-phosphoryl and 3'-hydroxyl groups in double-stranded DNA using NAD as a coenzyme and as the energy source for the reaction. It is essential for DNA replication and repair of damaged DNA. This Mycobacteroides abscessus (strain ATCC 19977 / DSM 44196 / CCUG 20993 / CIP 104536 / JCM 13569 / NCTC 13031 / TMC 1543 / L948) (Mycobacterium abscessus) protein is DNA ligase.